The primary structure comprises 190 residues: Holliday junction branch migration complex subunit RuvA (190 aa).

The tract at residues M1–K63 is domain I. The tract at residues D64–A138 is domain II. The interval A138 to S142 is flexible linker. The domain III stretch occupies residues Y143–L190.

Belongs to the RuvA family. In terms of assembly, homotetramer. Forms an RuvA(8)-RuvB(12)-Holliday junction (HJ) complex. HJ DNA is sandwiched between 2 RuvA tetramers; dsDNA enters through RuvA and exits via RuvB. An RuvB hexamer assembles on each DNA strand where it exits the tetramer. Each RuvB hexamer is contacted by two RuvA subunits (via domain III) on 2 adjacent RuvB subunits; this complex drives branch migration. In the full resolvosome a probable DNA-RuvA(4)-RuvB(12)-RuvC(2) complex forms which resolves the HJ.

It is found in the cytoplasm. Its function is as follows. The RuvA-RuvB-RuvC complex processes Holliday junction (HJ) DNA during genetic recombination and DNA repair, while the RuvA-RuvB complex plays an important role in the rescue of blocked DNA replication forks via replication fork reversal (RFR). RuvA specifically binds to HJ cruciform DNA, conferring on it an open structure. The RuvB hexamer acts as an ATP-dependent pump, pulling dsDNA into and through the RuvAB complex. HJ branch migration allows RuvC to scan DNA until it finds its consensus sequence, where it cleaves and resolves the cruciform DNA. This is Holliday junction branch migration complex subunit RuvA from Petrotoga mobilis (strain DSM 10674 / SJ95).